Here is a 255-residue protein sequence, read N- to C-terminus: Menaquinone reductase, iron-sulfur cluster-binding subunit (255 aa).

3 consecutive 4Fe-4S ferredoxin-type domains span residues 11-41, 66-97, and 99-128; these read WGMV…PQPD, HDVA…KNEE, and GIVS…FNWF. Cysteine 20, cysteine 23, cysteine 26, cysteine 30, cysteine 75, cysteine 78, cysteine 83, cysteine 87, cysteine 108, cysteine 111, cysteine 114, and cysteine 118 together coordinate [4Fe-4S] cluster. [3Fe-4S] cluster-binding residues include cysteine 155, cysteine 158, cysteine 188, and cysteine 192.

In terms of assembly, the Qrc complex is composed of four subunits: QrcA, QrcB, QrcC and QrcD. Can form a supercomplex with the [NiFe] hydrogenase HynA1 and the tetraheme Type I cytochrome c3 TpIc(3), its physiological electron donors. [4Fe-4S] cluster is required as a cofactor. It depends on [3Fe-4S] cluster as a cofactor.

The protein resides in the periplasm. Functionally, component of the respiratory Qrc complex, that catalyzes the reduction of the menaquinone pool using electrons transferred from the reduced periplasmic cytochrome c3, and which is probably involved in sulfate respiration. Is likely essential for growth on H(2) or formate since the periplasmic hydrogenases and/or formate dehydrogenases act as primary electron donors for the Qrc complex. QrcC is an electron-transferring subunit; its cubane iron sulfur clusters form a pathway for electron transfer between the hemes of QrcA and the membrane quinone pool. This Nitratidesulfovibrio vulgaris (strain ATCC 29579 / DSM 644 / CCUG 34227 / NCIMB 8303 / VKM B-1760 / Hildenborough) (Desulfovibrio vulgaris) protein is Menaquinone reductase, iron-sulfur cluster-binding subunit.